The following is a 310-amino-acid chain: tRNA dimethylallyltransferase (310 aa).

13–20 (GPTASGKT) lines the ATP pocket. A substrate-binding site is contributed by 15-20 (TASGKT). Interaction with substrate tRNA stretches follow at residues 38-41 (DSAL), 162-166 (QRLSR), 243-248 (RCVGYR), and 276-283 (KRQITWLR).

It belongs to the IPP transferase family. Monomer. Mg(2+) is required as a cofactor.

It carries out the reaction adenosine(37) in tRNA + dimethylallyl diphosphate = N(6)-dimethylallyladenosine(37) in tRNA + diphosphate. Functionally, catalyzes the transfer of a dimethylallyl group onto the adenine at position 37 in tRNAs that read codons beginning with uridine, leading to the formation of N6-(dimethylallyl)adenosine (i(6)A). This Aliivibrio fischeri (strain ATCC 700601 / ES114) (Vibrio fischeri) protein is tRNA dimethylallyltransferase.